Here is a 315-residue protein sequence, read N- to C-terminus: Homocysteine S-methyltransferase YbgG (315 aa).

In terms of domain architecture, Hcy-binding spans 2–309; the sequence is NPIQHILDTY…ENIQEIAAWA (308 aa). Zn(2+) contacts are provided by Cys-229, Cys-294, and Cys-295.

Requires Zn(2+) as cofactor.

The enzyme catalyses S-methyl-L-methionine + L-homocysteine = 2 L-methionine + H(+). This is Homocysteine S-methyltransferase YbgG (ybgG) from Bacillus subtilis (strain 168).